Consider the following 274-residue polypeptide: Formamidopyrimidine-DNA glycosylase (274 aa).

Residue P2 is the Schiff-base intermediate with DNA of the active site. Catalysis depends on E3, which acts as the Proton donor. K60 serves as the catalytic Proton donor; for beta-elimination activity. Residues H93 and R112 each coordinate DNA. An FPG-type zinc finger spans residues 240–274 (DVYGRKGETCRQCGTPITKTVVGGRGTHFCSVCQK). Residue R264 is the Proton donor; for delta-elimination activity of the active site.

It belongs to the FPG family. Monomer. The cofactor is Zn(2+).

The enzyme catalyses Hydrolysis of DNA containing ring-opened 7-methylguanine residues, releasing 2,6-diamino-4-hydroxy-5-(N-methyl)formamidopyrimidine.. It carries out the reaction 2'-deoxyribonucleotide-(2'-deoxyribose 5'-phosphate)-2'-deoxyribonucleotide-DNA = a 3'-end 2'-deoxyribonucleotide-(2,3-dehydro-2,3-deoxyribose 5'-phosphate)-DNA + a 5'-end 5'-phospho-2'-deoxyribonucleoside-DNA + H(+). Its function is as follows. Involved in base excision repair of DNA damaged by oxidation or by mutagenic agents. Acts as a DNA glycosylase that recognizes and removes damaged bases. Has a preference for oxidized purines, such as 7,8-dihydro-8-oxoguanine (8-oxoG). Has AP (apurinic/apyrimidinic) lyase activity and introduces nicks in the DNA strand. Cleaves the DNA backbone by beta-delta elimination to generate a single-strand break at the site of the removed base with both 3'- and 5'-phosphates. The chain is Formamidopyrimidine-DNA glycosylase (mutM) from Halalkalibacterium halodurans (strain ATCC BAA-125 / DSM 18197 / FERM 7344 / JCM 9153 / C-125) (Bacillus halodurans).